A 156-amino-acid polypeptide reads, in one-letter code: Cell division protein SepF (156 aa).

Positions Ser23–Asp36 are enriched in basic and acidic residues. Residues Ser23 to Gln49 are disordered.

This sequence belongs to the SepF family. As to quaternary structure, homodimer. Interacts with FtsZ.

It localises to the cytoplasm. Its function is as follows. Cell division protein that is part of the divisome complex and is recruited early to the Z-ring. Probably stimulates Z-ring formation, perhaps through the cross-linking of FtsZ protofilaments. Its function overlaps with FtsA. The protein is Cell division protein SepF of Bacillus anthracis (strain CDC 684 / NRRL 3495).